The primary structure comprises 402 residues: Endoplasmic reticulum junction formation protein lunapark-B (402 aa).

Residues 1 to 45 (MGAIISRWKTKPSTVELLESLDKDIKDLEEFRAKNQRLLKLWVGR) lie on the Cytoplasmic side of the membrane. A helical membrane pass occupies residues 46–66 (LLFYSSALYLLTCLCVYYLYF). The Lumenal segment spans residues 67–77 (PQQWGARLITA). Residues 78–98 (LPLLAFPALVLLLRKMLIFLF) form a helical membrane-spanning segment. At 99–402 (SKRTERNNDK…EEQKKEDESN (304 aa)) the chain is on the cytoplasmic side. A coiled-coil region spans residues 100–128 (KRTERNNDKLEDLKTQKRKILEEVMETET). The interval 142-240 (ESKKKAEAEA…PGPGSGMRPP (99 aa)) is disordered. Residues 205-222 (SASTPAGASQAETPQQMM) show a composition bias toward polar residues. A C4-type; plays a role in ER morphology zinc finger spans residues 276–301 (CQQCFSHNGMALKEEFEFVAFRCAYC). The disordered stretch occupies residues 311–402 (RPQAPRLPEF…EEQKKEDESN (92 aa)). The segment covering 321-330 (SFERRLRSES) has biased composition (basic and acidic residues). Acidic residues predominate over residues 341–352 (TPEDSDAPEDDM). Residues 385–402 (PHAEAEALEEQKKEDESN) are compositionally biased toward basic and acidic residues.

This sequence belongs to the lunapark family. Homodimer; homodimerization requires the C4-type zinc finger motif and decreases during mitosis in a phosphorylation-dependent manner. Phosphorylated. Phosphorylation occurs during interphase. Phosphorylation also occurs during mitosis; these phosphorylations reduce both its homodimerization and the ER three-way tubular junction formation.

The protein localises to the endoplasmic reticulum membrane. Its function is as follows. Endoplasmic reticulum (ER)-shaping membrane protein that plays a role in determining ER morphology. Involved in the stabilization of nascent three-way ER tubular junctions within the ER network. May also play a role as a curvature-stabilizing protein within three-way ER tubular junction network. The protein is Endoplasmic reticulum junction formation protein lunapark-B (lnpkb) of Danio rerio (Zebrafish).